The sequence spans 804 residues: Type 2 DNA topoisomerase 6 subunit B (804 aa).

Residues asparagine 58, aspartate 89, 110-111 (SR), 120-127 (GQQGIGIS), and lysine 629 each bind ATP.

This sequence belongs to the TOP6B family. In terms of assembly, homodimer. Heterotetramer of two Top6A and two Top6B chains.

It catalyses the reaction ATP-dependent breakage, passage and rejoining of double-stranded DNA.. Its function is as follows. Relaxes both positive and negative superturns and exhibits a strong decatenase activity. The polypeptide is Type 2 DNA topoisomerase 6 subunit B (Halobacterium salinarum (strain ATCC 29341 / DSM 671 / R1)).